Here is a 288-residue protein sequence, read N- to C-terminus: Glycine--tRNA ligase alpha subunit (288 aa).

The protein belongs to the class-II aminoacyl-tRNA synthetase family. Tetramer of two alpha and two beta subunits.

It is found in the cytoplasm. The enzyme catalyses tRNA(Gly) + glycine + ATP = glycyl-tRNA(Gly) + AMP + diphosphate. This chain is Glycine--tRNA ligase alpha subunit, found in Rickettsia rickettsii (strain Iowa).